The following is a 356-amino-acid chain: Heme A synthase (356 aa).

Transmembrane regions (helical) follow at residues 23–43 (IAIW…VGGV), 105–125 (FHRL…LYFL), 141–161 (IFLL…SGLV), 173–193 (AHLG…LDLL), and 212–232 (STML…VAGI). Heme is bound at residue H274. Helical transmembrane passes span 276 to 296 (LIAW…RAVP), 307 to 327 (LLLI…LLVV), and 329 to 349 (LTLA…ALWV). Position 335 (H335) interacts with heme.

This sequence belongs to the COX15/CtaA family. Type 2 subfamily. As to quaternary structure, interacts with CtaB. Heme b serves as cofactor.

The protein localises to the cell membrane. The catalysed reaction is Fe(II)-heme o + 2 A + H2O = Fe(II)-heme a + 2 AH2. It functions in the pathway porphyrin-containing compound metabolism; heme A biosynthesis; heme A from heme O: step 1/1. In terms of biological role, catalyzes the conversion of heme O to heme A by two successive hydroxylations of the methyl group at C8. The first hydroxylation forms heme I, the second hydroxylation results in an unstable dihydroxymethyl group, which spontaneously dehydrates, resulting in the formyl group of heme A. This Nitrosospira multiformis (strain ATCC 25196 / NCIMB 11849 / C 71) protein is Heme A synthase.